The chain runs to 118 residues: Putative ankyrin repeat protein R747 (118 aa).

The stretch at 70–99 (NCYYLLDYAIMKNDIPVIVTLIEKGANINR) is one ANK repeat.

The protein is Putative ankyrin repeat protein R747 of Acanthamoeba polyphaga (Amoeba).